A 338-amino-acid polypeptide reads, in one-letter code: Phenylalanine--tRNA ligase alpha subunit (338 aa).

A Mg(2+)-binding site is contributed by glutamate 252.

The protein belongs to the class-II aminoacyl-tRNA synthetase family. Phe-tRNA synthetase alpha subunit type 1 subfamily. As to quaternary structure, tetramer of two alpha and two beta subunits. The cofactor is Mg(2+).

It localises to the cytoplasm. The enzyme catalyses tRNA(Phe) + L-phenylalanine + ATP = L-phenylalanyl-tRNA(Phe) + AMP + diphosphate + H(+). This is Phenylalanine--tRNA ligase alpha subunit from Pseudomonas fluorescens (strain SBW25).